Here is a 229-residue protein sequence, read N- to C-terminus: MSPLTRIALALAASAALVLALTACGPAHVAGYVPKRRDYAVPDASGQDTQAASAGSTWREGRAASMLYTDARALRENDLVVVRIEEIADAKRSADTDLTRRSELNASIEAFLTSLSTPYALKGGADSGFKGLGSTARTERLTATVPAVVRKVLPNGNLFIEGHRVVLVNAEEQHFYISGVVRPIDIDQENGVKSSMVADAEIEFTGRGVLSDNQRQGWLSRLLGWFWPF.

The first 23 residues, 1-23, serve as a signal peptide directing secretion; sequence MSPLTRIALALAASAALVLALTA. Cys-24 carries the N-palmitoyl cysteine lipid modification. Cys-24 carries the S-diacylglycerol cysteine lipid modification.

This sequence belongs to the FlgH family. In terms of assembly, the basal body constitutes a major portion of the flagellar organelle and consists of four rings (L,P,S, and M) mounted on a central rod.

The protein resides in the cell outer membrane. The protein localises to the bacterial flagellum basal body. Its function is as follows. Assembles around the rod to form the L-ring and probably protects the motor/basal body from shearing forces during rotation. This is Flagellar L-ring protein from Anaeromyxobacter dehalogenans (strain 2CP-C).